The sequence spans 219 residues: 7-methyl-GTP pyrophosphatase (219 aa).

Asp89 acts as the Proton acceptor in catalysis.

The protein belongs to the Maf family. YceF subfamily. Requires a divalent metal cation as cofactor.

It localises to the cytoplasm. The enzyme catalyses N(7)-methyl-GTP + H2O = N(7)-methyl-GMP + diphosphate + H(+). Functionally, nucleoside triphosphate pyrophosphatase that hydrolyzes 7-methyl-GTP (m(7)GTP). May have a dual role in cell division arrest and in preventing the incorporation of modified nucleotides into cellular nucleic acids. The polypeptide is 7-methyl-GTP pyrophosphatase (Polaromonas sp. (strain JS666 / ATCC BAA-500)).